Here is a 538-residue protein sequence, read N- to C-terminus: Translocated intimin receptor Tir (538 aa).

Disordered stretches follow at residues 1 to 37 (MPIGNLGHNPNVRALIPPAPPLPSQTDGAGGARNQLI) and 184 to 204 (LEPKDTKETKEPGDPNSGEGK). Topologically, residues 1 to 222 (MPIGNLGHNP…STSSLRADPK (222 aa)) are cytoplasmic. Basic and acidic residues predominate over residues 184 to 196 (LEPKDTKETKEPG). A helical transmembrane segment spans residues 223 to 243 (LWLSLGTIAAGLIGMAATGIA). Residues 244–354 (QAVALTPEPD…QEMSLSSGVG (111 aa)) lie on the Extracellular side of the membrane. Disordered stretches follow at residues 279 to 299 (AFQNPDNQKVNIDENGNAIPS) and 313 to 347 (QAKAAGEQARQEAIESNSQAQQKYDEQHAKREQEM). Positions 335–346 (KYDEQHAKREQE) are enriched in basic and acidic residues. The chain crosses the membrane as a helical span at residues 355–375 (YGISGALILGGGIGAGVTAAL). Topologically, residues 376–538 (HRKNQPAEQT…APTPGPARFV (163 aa)) are cytoplasmic. A disordered region spans residues 380-449 (QPAEQTITTR…NPYADVGMPR (70 aa)). Positions 381–411 (PAEQTITTRTVVDNQPTNNASAQGNTDTSGP) are enriched in polar residues. Low complexity predominate over residues 417 to 430 (SRRNSNASLASNGS). An Essential for actin pedestal formation motif is present at residues 440-442 (NPY).

Belongs to the Tir receptor family. Interacts with intimin and host proteins. Post-translationally, phosphorylated by host kinases.

The protein localises to the secreted. It is found in the host cell membrane. In terms of biological role, multifunctional protein that is required for efficient pedestal formation in host epithelial cells during infection. The extracellular region acts as a receptor for bacterial intimin, allowing the bacterium to attach tightly to the host-cell surface. Simultaneously, the intracellular region initiates a signaling cascade in the host cell, which leads to actin polymerization and formation of actin pedestals at the sites of bacterial adhesion. The polypeptide is Translocated intimin receptor Tir (tir) (Escherichia coli).